Consider the following 449-residue polypeptide: Ribulose bisphosphate carboxylase large chain (449 aa).

A propeptide spanning residues 1–2 (MS) is cleaved from the precursor. N-acetylproline is present on Pro3. Lys14 is subject to N6,N6,N6-trimethyllysine. Residues Asn123 and Thr173 each contribute to the substrate site. The Proton acceptor role is filled by Lys175. Lys177 contacts substrate. Mg(2+)-binding residues include Lys201, Asp203, and Glu204. Lys201 carries the N6-carboxylysine modification. His294 (proton acceptor) is an active-site residue. Substrate-binding residues include Arg295, His327, and Ser379.

Belongs to the RuBisCO large chain family. Type I subfamily. In terms of assembly, heterohexadecamer of 8 large chains and 8 small chains; disulfide-linked. The disulfide link is formed within the large subunit homodimers. Mg(2+) serves as cofactor. The disulfide bond which can form in the large chain dimeric partners within the hexadecamer appears to be associated with oxidative stress and protein turnover.

The protein resides in the plastid. Its subcellular location is the chloroplast. It catalyses the reaction 2 (2R)-3-phosphoglycerate + 2 H(+) = D-ribulose 1,5-bisphosphate + CO2 + H2O. It carries out the reaction D-ribulose 1,5-bisphosphate + O2 = 2-phosphoglycolate + (2R)-3-phosphoglycerate + 2 H(+). RuBisCO catalyzes two reactions: the carboxylation of D-ribulose 1,5-bisphosphate, the primary event in carbon dioxide fixation, as well as the oxidative fragmentation of the pentose substrate in the photorespiration process. Both reactions occur simultaneously and in competition at the same active site. The sequence is that of Ribulose bisphosphate carboxylase large chain from Hippocratea richardiana.